A 403-amino-acid polypeptide reads, in one-letter code: S-adenosylmethionine synthase (403 aa).

His-14 provides a ligand contact to ATP. Mg(2+) is bound at residue Asp-16. Glu-42 provides a ligand contact to K(+). Residues Glu-55 and Gln-99 each coordinate L-methionine. Residues 99–109 form a flexible loop region; it reads QSPEIAEGVDH. ATP contacts are provided by residues 180-182, 250-251, Asp-259, 265-266, Ala-282, and Lys-286; these read DAK, RF, and RK. Position 259 (Asp-259) interacts with L-methionine. Lys-290 provides a ligand contact to L-methionine.

The protein belongs to the AdoMet synthase family. In terms of assembly, homotetramer; dimer of dimers. The cofactor is Mg(2+). Requires K(+) as cofactor.

The protein localises to the cytoplasm. The catalysed reaction is L-methionine + ATP + H2O = S-adenosyl-L-methionine + phosphate + diphosphate. The protein operates within amino-acid biosynthesis; S-adenosyl-L-methionine biosynthesis; S-adenosyl-L-methionine from L-methionine: step 1/1. Functionally, catalyzes the formation of S-adenosylmethionine (AdoMet) from methionine and ATP. The overall synthetic reaction is composed of two sequential steps, AdoMet formation and the subsequent tripolyphosphate hydrolysis which occurs prior to release of AdoMet from the enzyme. This is S-adenosylmethionine synthase from Deinococcus deserti (strain DSM 17065 / CIP 109153 / LMG 22923 / VCD115).